Reading from the N-terminus, the 318-residue chain is NADH-ubiquinone oxidoreductase chain 1 (318 aa).

Helical transmembrane passes span 2-22, 68-88, 100-120, 147-167, 172-192, 217-237, 253-273, and 294-314; these read FMIN…FLTL, ISMF…MWIP, LGVL…LWSG, AIIL…TLII, VWLI…TLAE, AGPF…MNIF, ELYT…FLWI, and LPLT…LSSI.

This sequence belongs to the complex I subunit 1 family.

The protein resides in the mitochondrion inner membrane. The enzyme catalyses a ubiquinone + NADH + 5 H(+)(in) = a ubiquinol + NAD(+) + 4 H(+)(out). Core subunit of the mitochondrial membrane respiratory chain NADH dehydrogenase (Complex I) that is believed to belong to the minimal assembly required for catalysis. Complex I functions in the transfer of electrons from NADH to the respiratory chain. The immediate electron acceptor for the enzyme is believed to be ubiquinone. In Ovis aries (Sheep), this protein is NADH-ubiquinone oxidoreductase chain 1 (MT-ND1).